Consider the following 701-residue polypeptide: Elongation factor G 1 (701 aa).

A tr-type G domain is found at 13–288; that stretch reads KYTRNIGIMA…GVIDYLPSPL (276 aa). GTP-binding positions include 22–29, 86–90, and 140–143; these read AHIDAGKT, DTPGH, and NKMD.

This sequence belongs to the TRAFAC class translation factor GTPase superfamily. Classic translation factor GTPase family. EF-G/EF-2 subfamily.

The protein resides in the cytoplasm. Functionally, catalyzes the GTP-dependent ribosomal translocation step during translation elongation. During this step, the ribosome changes from the pre-translocational (PRE) to the post-translocational (POST) state as the newly formed A-site-bound peptidyl-tRNA and P-site-bound deacylated tRNA move to the P and E sites, respectively. Catalyzes the coordinated movement of the two tRNA molecules, the mRNA and conformational changes in the ribosome. The protein is Elongation factor G 1 of Bdellovibrio bacteriovorus (strain ATCC 15356 / DSM 50701 / NCIMB 9529 / HD100).